A 222-amino-acid polypeptide reads, in one-letter code: Cytidylate kinase (222 aa).

Residue 11-19 (GPTASGKGT) participates in ATP binding.

It belongs to the cytidylate kinase family. Type 1 subfamily.

The protein resides in the cytoplasm. The enzyme catalyses CMP + ATP = CDP + ADP. It catalyses the reaction dCMP + ATP = dCDP + ADP. This Cupriavidus necator (strain ATCC 17699 / DSM 428 / KCTC 22496 / NCIMB 10442 / H16 / Stanier 337) (Ralstonia eutropha) protein is Cytidylate kinase.